Consider the following 253-residue polypeptide: 5'/3'-nucleotidase SurE (253 aa).

Asp-8, Asp-9, Ser-39, and Asn-92 together coordinate a divalent metal cation.

The protein belongs to the SurE nucleotidase family. Requires a divalent metal cation as cofactor.

The protein resides in the cytoplasm. The enzyme catalyses a ribonucleoside 5'-phosphate + H2O = a ribonucleoside + phosphate. It carries out the reaction a ribonucleoside 3'-phosphate + H2O = a ribonucleoside + phosphate. The catalysed reaction is [phosphate](n) + H2O = [phosphate](n-1) + phosphate + H(+). In terms of biological role, nucleotidase with a broad substrate specificity as it can dephosphorylate various ribo- and deoxyribonucleoside 5'-monophosphates and ribonucleoside 3'-monophosphates with highest affinity to 3'-AMP. Also hydrolyzes polyphosphate (exopolyphosphatase activity) with the preference for short-chain-length substrates (P20-25). Might be involved in the regulation of dNTP and NTP pools, and in the turnover of 3'-mononucleotides produced by numerous intracellular RNases (T1, T2, and F) during the degradation of various RNAs. The chain is 5'/3'-nucleotidase SurE from Enterobacter sp. (strain 638).